The sequence spans 153 residues: 6,7-dimethyl-8-ribityllumazine synthase (153 aa).

Residues phenylalanine 21, 55 to 57, and 79 to 81 each bind 5-amino-6-(D-ribitylamino)uracil; these read AFE and TVI. (2S)-2-hydroxy-3-oxobutyl phosphate is bound at residue 84–85; that stretch reads AT. Histidine 87 (proton donor) is an active-site residue. Phenylalanine 112 is a 5-amino-6-(D-ribitylamino)uracil binding site. Arginine 126 is a (2S)-2-hydroxy-3-oxobutyl phosphate binding site.

This sequence belongs to the DMRL synthase family. In terms of assembly, forms an icosahedral capsid composed of 60 subunits, arranged as a dodecamer of pentamers.

It carries out the reaction (2S)-2-hydroxy-3-oxobutyl phosphate + 5-amino-6-(D-ribitylamino)uracil = 6,7-dimethyl-8-(1-D-ribityl)lumazine + phosphate + 2 H2O + H(+). It participates in cofactor biosynthesis; riboflavin biosynthesis; riboflavin from 2-hydroxy-3-oxobutyl phosphate and 5-amino-6-(D-ribitylamino)uracil: step 1/2. Its function is as follows. Catalyzes the formation of 6,7-dimethyl-8-ribityllumazine by condensation of 5-amino-6-(D-ribitylamino)uracil with 3,4-dihydroxy-2-butanone 4-phosphate. This is the penultimate step in the biosynthesis of riboflavin. The polypeptide is 6,7-dimethyl-8-ribityllumazine synthase (Bacillus cereus (strain 03BB102)).